We begin with the raw amino-acid sequence, 131 residues long: Protein ApaG (131 aa).

The ApaG domain maps to 3–127 (RAVTRQIEVT…FSLDSPDGGK (125 aa)).

The protein is Protein ApaG of Bradyrhizobium sp. (strain BTAi1 / ATCC BAA-1182).